The chain runs to 382 residues: MKITKITTYRLPPRWMFLKIETDEGIVGWGEPVIEGRARTVEAAVHELSDYLIGQDPARINDIWQVLYRAGFYRGGPILMSAIAGIDQALWDIKGKALGVPVYQLLGGLVRDKIKAYSWVGGDRPSEVIAGIKKLTEIGFDTFKLNGCEEMGIIDNSRKVDAAVAVVAEIREAFGNSIEFGLDFHGRVDAPMAKILIKELEPYRPLFIEEPVLAEQAEYYPRLAAQTHLPIAAGERMFSRFDFKRVLADGGLAIIQPDLSHAGGITECFKIAAMAEAYDVALAPHCPLGPIALASCLHLDFVARNAVLQEQSMGIHYNKGAELLDYVINKEDFAMTDGHFYPLNKPGLGVEINEELVIERSKNAPDWRNPVWRYPDGAVAEW.

D183 contacts Mg(2+). H185 (proton donor) is an active-site residue. Residues E209 and E235 each contribute to the Mg(2+) site. Residue H285 is the Proton acceptor of the active site.

It belongs to the mandelate racemase/muconate lactonizing enzyme family. GalD subfamily. The cofactor is Mg(2+).

The enzyme catalyses D-galactonate = 2-dehydro-3-deoxy-D-galactonate + H2O. It functions in the pathway carbohydrate acid metabolism; D-galactonate degradation; D-glyceraldehyde 3-phosphate and pyruvate from D-galactonate: step 1/3. In terms of biological role, catalyzes the dehydration of D-galactonate to 2-keto-3-deoxy-D-galactonate. The chain is D-galactonate dehydratase from Pectobacterium atrosepticum (strain SCRI 1043 / ATCC BAA-672) (Erwinia carotovora subsp. atroseptica).